A 268-amino-acid chain; its full sequence is Microtubule-associated protein RP/EB family member 1 (268 aa).

Residue Ala2 is modified to N-acetylalanine. Residues 14 to 116 enclose the Calponin-homology (CH) domain; sequence NLSRHDMLAW…FVQWFKKFFD (103 aa). The residue at position 66 (Lys66) is an N6-crotonyllysine. The residue at position 124 (Tyr124) is a Phosphotyrosine. An interaction with MTUS2/TIP150 region spans residues 124 to 268; that stretch reads YDPVAARQGQ…GGPQEEQEEY (145 aa). A disordered region spans residues 146 to 191; sequence LSKPKKPLGSGSAAPQRPIATQRTTAAPKAGPGMVRKNPGMGNGDD. Ser155 is subject to Phosphoserine. Residues 185–255 enclose the EB1 C-terminal domain; sequence GMGNGDDEAA…LYATDEGFVI (71 aa). The segment at 206 to 211 is interaction with APC; it reads TVEDLE. The interval 208-268 is DCTN1-binding; sequence EDLEKERDFY…GGPQEEQEEY (61 aa). N6-acetyllysine is present on Lys220. An APC-binding region spans residues 220–242; the sequence is KLRNIELICQENEGENDPVLQRI. The interaction with SKA1 stretch occupies residues 232–255; that stretch reads EGENDPVLQRIVDILYATDEGFVI.

Belongs to the MAPRE family. As to quaternary structure, homodimer. Heterodimer with MAPRE3. Interacts with DCTN1, DCTN2, TERF1 and dynein intermediate chain. Interaction with DIAPH1 and DIAPH2. Interacts (via C-terminal residues 206-211) with APC (via C-terminal residues 2674-2845); the interaction inhibits association with and bundling of F-actin. Interacts with CLASP2, DST, KIF2C and STIM1; probably required for their targeting to the growing microtubule plus ends. Interacts with MTUS2; interaction is direct and probably targets MTUS2 to microtubules. Interacts (via C-terminus) with SKA1 (via SXIP motif); the interaction is direct and stabilizes the kinetochore-microtubule attachment of the SKA1 complex. Interacts with APC2. Interacts with CLASP1. Interacts with CDK5RAP2. According to another report, MAPRE1 does not interact with CDK5RAP2. Interacts with MACF1. Interacts with RABL2/RABL2A; binds preferentially to GTP-bound RABL2. Interacts with KCNAB2. Interacts (via C-terminus) with CLIP1. Interacts with SLAIN2 and SLAIN1. Interacts with KIF18B; this interaction is required for efficient accumulation of KIF18B at microtubule plus ends. Interacts with MISP. Interacts with KNSTRN. Interacts with NCKAP5L. Interacts with AKAP9. Interacts with PDE4DIP; this interaction, which is PDE4DIP isoform-specific, is required for its recruitment to the Golgi apparatus. Interacts with CAMSAP2. May form a pericentrosomal complex with AKAP9, CDK5RAP2 and PDE4DIP isoform 2/MMG8/SMYLE; within this complex, MAPRE1 binding to CDK5RAP2 may be mediated by PDE4DIP. Contrary to other mammalian species, does not interact with CDK5RAP2, possibly due to the lack of conservation of the MAPRE1-binding motif in rat CDK5RAP2. Interacts with AKNA. Interacts with GAS2L1, GAS2L2, and GAS2L3. Interacts with RARRES1 and AGBL2. Post-translationally, acetylation at Lys-220 by KAT2B/PCAF promotes dynamic kinetochore-microtubule interactions in early mitosis. In terms of processing, crotonylated by KAT5 during mitosis, promoting astral microtubule plasticity and dynamic connection between astral microtubules and the cortex during mitotic chromosome segregation, thereby ensuring accurate spindle positioning in mitosis. Decrotonylated by HDAC3.

The protein localises to the cytoplasm. The protein resides in the cytoskeleton. It is found in the microtubule organizing center. Its subcellular location is the centrosome. It localises to the golgi apparatus. The protein localises to the spindle. The protein resides in the spindle pole. Functionally, plus-end tracking protein (+TIP) that binds to the plus-end of microtubules and regulates the dynamics of the microtubule cytoskeleton. Recruits other +TIP proteins to microtubules by binding to a conserved Ser-X-Leu-Pro (SXLP) motif in their polypeptide chains. Promotes cytoplasmic microtubule nucleation and elongation. Involved in mitotic spindle positioning by stabilizing microtubules and promoting dynamic connection between astral microtubules and the cortex during mitotic chromosome segregation. Assists chromosome alignment in metaphase by recruiting the SKA complex to the spindle and stabilizing its interactions with microtubule bundles (K-fibers). Also acts as a regulator of minus-end microtubule organization: interacts with the complex formed by AKAP9 and PDE4DIP, leading to recruit CAMSAP2 to the Golgi apparatus, thereby tethering non-centrosomal minus-end microtubules to the Golgi, an important step for polarized cell movement. Promotes elongation of CAMSAP2-decorated microtubule stretches on the minus-end of microtubules. Acts as a regulator of autophagosome transport via interaction with CAMSAP2. Functions downstream of Rho GTPases and DIAPH1 in stable microtubule formation. May play a role in cell migration. In Rattus norvegicus (Rat), this protein is Microtubule-associated protein RP/EB family member 1 (Mapre1).